The following is a 326-amino-acid chain: Sulfate/thiosulfate import ATP-binding protein CysA (326 aa).

One can recognise an ABC transporter domain in the interval 3–237 (IEVRNVSKNF…PSNDFVYHFL (235 aa)). 35-42 (GPSGCGKT) contributes to the ATP binding site.

This sequence belongs to the ABC transporter superfamily. Sulfate/tungstate importer (TC 3.A.1.6) family. In terms of assembly, the complex is composed of two ATP-binding proteins (CysA), two transmembrane proteins (CysT and CysW) and a solute-binding protein (CysP).

The protein resides in the cell inner membrane. It carries out the reaction sulfate(out) + ATP + H2O = sulfate(in) + ADP + phosphate + H(+). It catalyses the reaction thiosulfate(out) + ATP + H2O = thiosulfate(in) + ADP + phosphate + H(+). Part of the ABC transporter complex CysAWTP involved in sulfate/thiosulfate import. Responsible for energy coupling to the transport system. The sequence is that of Sulfate/thiosulfate import ATP-binding protein CysA from Pseudomonas syringae pv. tomato (strain ATCC BAA-871 / DC3000).